Consider the following 684-residue polypeptide: Hydroxyproline O-galactosyltransferase GALT2 (684 aa).

The Cytoplasmic segment spans residues 1–22 (MKRVKSESFRGVYSSRRFKLSH). A helical; Signal-anchor for type II membrane protein transmembrane segment spans residues 23–43 (FLLAIAGFYLVFLAFKFPHFI). Residues 44–684 (EMVAMLSGDT…KGRPQCCNFR (641 aa)) are Lumenal-facing. The interval 80-102 (KLEDEDHQSGPSTTQKVSPEEKI) is disordered. Residues asparagine 103, asparagine 127, and asparagine 162 are each glycosylated (N-linked (GlcNAc...) asparagine). A Galectin domain is found at 191 to 405 (RIMLLPCGLA…DVDIHSIHAT (215 aa)). N-linked (GlcNAc...) asparagine glycosylation is found at asparagine 524 and asparagine 632.

The protein belongs to the glycosyltransferase 31 family. Mn(2+) is required as a cofactor. Expressed in stems and at lower levels in cauline leaves and siliques.

It is found in the golgi apparatus membrane. It functions in the pathway protein modification; protein glycosylation. Its function is as follows. Possesses hydroxyproline O-galactosyltransferase activity. Transfers galactose from UDP-galactose to hydroxyproline residues in the arabinogalactan proteins (AGPs). Is specific for AGPs containing non-contiguous peptidyl hydroxyproline residues. Utilizes UDP-galactose solely as sugar donor. The addition of galactose onto the peptidyl hydroxyproline residues in AGP core proteins represents the first committed step in arabinogalactan polysaccharide addition. AGP glycans play essential roles in both vegetative and reproductive plant growth. This is Hydroxyproline O-galactosyltransferase GALT2 from Arabidopsis thaliana (Mouse-ear cress).